The chain runs to 152 residues: Putative polyketide cyclase (152 aa).

The protein to polyketide cyclases.

It participates in antibiotic biosynthesis; curamycin biosynthesis. The sequence is that of Putative polyketide cyclase (curF) from Streptomyces cyaneus (Streptomyces curacoi).